The chain runs to 467 residues: tRNA-2-methylthio-N(6)-dimethylallyladenosine synthase (467 aa).

Residues 1–20 are disordered; the sequence is MSDDTTQIEPAMAQETSPRA. An MTTase N-terminal domain is found at 23 to 143; the sequence is RKVFVKTYGC…LPNALARVRG (121 aa). [4Fe-4S] cluster is bound by residues Cys32, Cys68, Cys106, Cys184, Cys188, and Cys191. Residues 170–402 form the Radical SAM core domain; that stretch reads RKRGVSAFLT…QALLSAQQYA (233 aa). The TRAM domain maps to 405 to 467; the sequence is DSMIGRKMDV…TNSLIAQKLA (63 aa).

It belongs to the methylthiotransferase family. MiaB subfamily. In terms of assembly, monomer. The cofactor is [4Fe-4S] cluster.

Its subcellular location is the cytoplasm. The catalysed reaction is N(6)-dimethylallyladenosine(37) in tRNA + (sulfur carrier)-SH + AH2 + 2 S-adenosyl-L-methionine = 2-methylsulfanyl-N(6)-dimethylallyladenosine(37) in tRNA + (sulfur carrier)-H + 5'-deoxyadenosine + L-methionine + A + S-adenosyl-L-homocysteine + 2 H(+). In terms of biological role, catalyzes the methylthiolation of N6-(dimethylallyl)adenosine (i(6)A), leading to the formation of 2-methylthio-N6-(dimethylallyl)adenosine (ms(2)i(6)A) at position 37 in tRNAs that read codons beginning with uridine. The protein is tRNA-2-methylthio-N(6)-dimethylallyladenosine synthase of Brucella melitensis biotype 1 (strain ATCC 23456 / CCUG 17765 / NCTC 10094 / 16M).